The primary structure comprises 103 residues: Small ribosomal subunit protein uS10 (103 aa).

This sequence belongs to the universal ribosomal protein uS10 family. Part of the 30S ribosomal subunit.

Functionally, involved in the binding of tRNA to the ribosomes. The protein is Small ribosomal subunit protein uS10 of Vibrio campbellii (strain ATCC BAA-1116).